The sequence spans 666 residues: tRNA 5-methylaminomethyl-2-thiouridine biosynthesis bifunctional protein MnmC (666 aa).

The segment at 1-245 is tRNA (mnm(5)s(2)U34)-methyltransferase; the sequence is MKQYAIQPAT…KREMLCGVME (245 aa). The tract at residues 270–666 is FAD-dependent cmnm(5)s(2)U34 oxidoreductase; it reads IGGGIASALL…RKLLKGKAVK (397 aa).

The protein in the N-terminal section; belongs to the methyltransferase superfamily. tRNA (mnm(5)s(2)U34)-methyltransferase family. It in the C-terminal section; belongs to the DAO family. The cofactor is FAD.

Its subcellular location is the cytoplasm. It catalyses the reaction 5-aminomethyl-2-thiouridine(34) in tRNA + S-adenosyl-L-methionine = 5-methylaminomethyl-2-thiouridine(34) in tRNA + S-adenosyl-L-homocysteine + H(+). In terms of biological role, catalyzes the last two steps in the biosynthesis of 5-methylaminomethyl-2-thiouridine (mnm(5)s(2)U) at the wobble position (U34) in tRNA. Catalyzes the FAD-dependent demodification of cmnm(5)s(2)U34 to nm(5)s(2)U34, followed by the transfer of a methyl group from S-adenosyl-L-methionine to nm(5)s(2)U34, to form mnm(5)s(2)U34. The chain is tRNA 5-methylaminomethyl-2-thiouridine biosynthesis bifunctional protein MnmC from Salmonella paratyphi B (strain ATCC BAA-1250 / SPB7).